An 822-amino-acid polypeptide reads, in one-letter code: DNA gyrase subunit A (822 aa).

Residues 32–497 form the Topo IIA-type catalytic domain; the sequence is LPDVRDGLKP…QVLSLEDEDL (466 aa). Residue tyrosine 120 is the O-(5'-phospho-DNA)-tyrosine intermediate of the active site. A GyrA-box motif is present at residues 524-530; the sequence is QKRGGRG.

Belongs to the type II topoisomerase GyrA/ParC subunit family. In terms of assembly, heterotetramer, composed of two GyrA and two GyrB chains. In the heterotetramer, GyrA contains the active site tyrosine that forms a transient covalent intermediate with DNA, while GyrB binds cofactors and catalyzes ATP hydrolysis.

The protein localises to the cytoplasm. It catalyses the reaction ATP-dependent breakage, passage and rejoining of double-stranded DNA.. In terms of biological role, a type II topoisomerase that negatively supercoils closed circular double-stranded (ds) DNA in an ATP-dependent manner to modulate DNA topology and maintain chromosomes in an underwound state. Negative supercoiling favors strand separation, and DNA replication, transcription, recombination and repair, all of which involve strand separation. Also able to catalyze the interconversion of other topological isomers of dsDNA rings, including catenanes and knotted rings. Type II topoisomerases break and join 2 DNA strands simultaneously in an ATP-dependent manner. This chain is DNA gyrase subunit A, found in Streptococcus pneumoniae (strain ATCC BAA-255 / R6).